The following is a 579-amino-acid chain: Mycobactin import ATP-binding/permease protein IrtB (579 aa).

At 1–25 the chain is on the cytoplasmic side; the sequence is MIRTLLRLVPAEKRGAVAGYAVLTL. Residues 21-299 form the ABC transmembrane type-1 domain; sequence AVLTLLSVLL…IADLAPALET (279 aa). The helical transmembrane segment at 26–46 threads the bilayer; that stretch reads LSVLLRAVGAVLLIPLLAALF. Residues 47–48 lie on the Periplasmic side of the membrane; it reads SD. Residues 49–69 form a helical membrane-spanning segment; the sequence is TPSDAWLWLGWLTAVTLAGWV. Residues 70–126 lie on the Cytoplasmic side of the membrane; sequence TDTNTARLGFDLGFAVLSRTQHDMADRLPNVAMSWFTPDNTATARQAIAATGPELAG. 2 consecutive transmembrane segments (helical) span residues 127–147 and 148–168; these read LVVNLLTPLIGAALLPAAIGV and ALLFVSVPLGLAALAGVAVLF. Residues 169-241 are Cytoplasmic-facing; it reads GALALSGRLS…RLLTMQIPGQ (73 aa). The helical transmembrane segment at 242–262 threads the bilayer; that stretch reads VLFSLAGQVALIGFAGMAVWL. At 263–272 the chain is on the periplasmic side; that stretch reads TVRGQLGVPE. The helical transmembrane segment at 273–293 threads the bilayer; the sequence is AIALIVVLVRYLEPFAAIADL. At 294-579 the chain is on the cytoplasmic side; sequence APALETTRAT…SEWAIGSTAR (286 aa). The ABC transporter domain occupies 332–565; that stretch reads IEFDDVRFSY…GGRFAQFWAQ (234 aa). 364-371 serves as a coordination point for ATP; that stretch reads GPSGSGKT.

It belongs to the ABC transporter superfamily. Siderophore-Fe(3+) uptake transporter (SIUT) (TC 3.A.1.21) family. Forms a heterodimer with IrtA.

It is found in the cell inner membrane. Its activity is regulated as follows. The ATPase activity of IrtAB is stimulated more than 38-fold in the presence of Fe-MBT, and more than 10-fold in the presence of Fe-cMBT. Part of the ABC transporter complex IrtAB involved in the import of iron-bound mycobactin (Fe-MBT) and carboxymycobactin (Fe-cMBT). Has a preference for Fe-MBT over Fe-cMBT. Transmembrane domains (TMD) form a pore in the membrane and the ATP-binding domain (NBD) is responsible for energy generation. This Mycolicibacterium thermoresistibile (strain ATCC 19527 / DSM 44167 / CIP 105390 / JCM 6362 / NCTC 10409 / 316) (Mycobacterium thermoresistibile) protein is Mycobactin import ATP-binding/permease protein IrtB.